The sequence spans 225 residues: UPF0173 metal-dependent hydrolase PF1764 (225 aa).

Belongs to the UPF0173 family.

This Pyrococcus furiosus (strain ATCC 43587 / DSM 3638 / JCM 8422 / Vc1) protein is UPF0173 metal-dependent hydrolase PF1764.